We begin with the raw amino-acid sequence, 383 residues long: S-adenosylmethionine synthase (383 aa).

His15 contacts ATP. Asp17 serves as a coordination point for Mg(2+). Glu43 contributes to the K(+) binding site. L-methionine is bound by residues Glu56 and Gln99. Residues Gln99 to Arg109 are flexible loop. ATP contacts are provided by residues Asp164–Lys166, Arg230–Phe231, Asp239, Arg245–Lys246, Ala262, and Lys266. Asp239 serves as a coordination point for L-methionine. Lys270 is a binding site for L-methionine.

This sequence belongs to the AdoMet synthase family. In terms of assembly, homotetramer; dimer of dimers. Requires Mg(2+) as cofactor. K(+) is required as a cofactor.

It localises to the cytoplasm. It carries out the reaction L-methionine + ATP + H2O = S-adenosyl-L-methionine + phosphate + diphosphate. The protein operates within amino-acid biosynthesis; S-adenosyl-L-methionine biosynthesis; S-adenosyl-L-methionine from L-methionine: step 1/1. Functionally, catalyzes the formation of S-adenosylmethionine (AdoMet) from methionine and ATP. The overall synthetic reaction is composed of two sequential steps, AdoMet formation and the subsequent tripolyphosphate hydrolysis which occurs prior to release of AdoMet from the enzyme. This is S-adenosylmethionine synthase from Pseudoalteromonas translucida (strain TAC 125).